Reading from the N-terminus, the 310-residue chain is Methionyl-tRNA formyltransferase (310 aa).

109 to 112 is a binding site for (6S)-5,6,7,8-tetrahydrofolate; the sequence is SLLP. The disordered stretch occupies residues 283–310; the sequence is QPQGKKAMPAADWARGARIGDGERFGDD. Over residues 300-310 the composition is skewed to basic and acidic residues; it reads RIGDGERFGDD.

This sequence belongs to the Fmt family.

The catalysed reaction is L-methionyl-tRNA(fMet) + (6R)-10-formyltetrahydrofolate = N-formyl-L-methionyl-tRNA(fMet) + (6S)-5,6,7,8-tetrahydrofolate + H(+). Its function is as follows. Attaches a formyl group to the free amino group of methionyl-tRNA(fMet). The formyl group appears to play a dual role in the initiator identity of N-formylmethionyl-tRNA by promoting its recognition by IF2 and preventing the misappropriation of this tRNA by the elongation apparatus. This Thermobifida fusca (strain YX) protein is Methionyl-tRNA formyltransferase.